Reading from the N-terminus, the 212-residue chain is tRNA (guanine-N(7)-)-methyltransferase (212 aa).

Residues glutamate 44, aspartate 69, aspartate 96, and aspartate 118 each contribute to the S-adenosyl-L-methionine site. The active site involves aspartate 118. Substrate is bound at residue lysine 122. The segment at arginine 124–arginine 129 is interaction with RNA. Substrate contacts are provided by residues aspartate 154 and threonine 191–glutamate 194.

It belongs to the class I-like SAM-binding methyltransferase superfamily. TrmB family.

The enzyme catalyses guanosine(46) in tRNA + S-adenosyl-L-methionine = N(7)-methylguanosine(46) in tRNA + S-adenosyl-L-homocysteine. It functions in the pathway tRNA modification; N(7)-methylguanine-tRNA biosynthesis. In terms of biological role, catalyzes the formation of N(7)-methylguanine at position 46 (m7G46) in tRNA. This Streptococcus sanguinis (strain SK36) protein is tRNA (guanine-N(7)-)-methyltransferase.